A 202-amino-acid polypeptide reads, in one-letter code: Small ribosomal subunit protein uS4 (202 aa).

The tract at residues 16 to 42 (GELPGLSRKNPRRAYPPGQHGQARKKR) is disordered. Positions 90–151 (MRLDNTVFRL…QERSRRLVEA (62 aa)) constitute an S4 RNA-binding domain.

It belongs to the universal ribosomal protein uS4 family. As to quaternary structure, part of the 30S ribosomal subunit. Contacts protein S5. The interaction surface between S4 and S5 is involved in control of translational fidelity.

One of the primary rRNA binding proteins, it binds directly to 16S rRNA where it nucleates assembly of the body of the 30S subunit. Functionally, with S5 and S12 plays an important role in translational accuracy. This is Small ribosomal subunit protein uS4 from Rippkaea orientalis (strain PCC 8801 / RF-1) (Cyanothece sp. (strain PCC 8801)).